We begin with the raw amino-acid sequence, 1261 residues long: Pentatricopeptide repeat-containing protein 5, mitochondrial (1261 aa).

15 PPR repeats span residues H365–T404, N405–I442, P443–A479, S480–D514, T550–L584, H806–N849, M852–P886, R887–P924, S925–P959, T960–P995, R996–P1031, S1032–I1068, D1109–L1143, N1144–K1179, and E1180–L1214. Positions N1225–N1261 are disordered. Positions L1237 to N1261 are enriched in polar residues.

The protein resides in the mitochondrion. In terms of biological role, mitochondrial RNA-binding protein that acts as a general negative regulator of mitochondrial translation. The chain is Pentatricopeptide repeat-containing protein 5, mitochondrial (ppr5) from Schizosaccharomyces pombe (strain 972 / ATCC 24843) (Fission yeast).